A 217-amino-acid polypeptide reads, in one-letter code: N-(5'-phosphoribosyl)anthranilate isomerase (217 aa).

The protein belongs to the TrpF family.

It catalyses the reaction N-(5-phospho-beta-D-ribosyl)anthranilate = 1-(2-carboxyphenylamino)-1-deoxy-D-ribulose 5-phosphate. It participates in amino-acid biosynthesis; L-tryptophan biosynthesis; L-tryptophan from chorismate: step 3/5. This Bacillus velezensis (strain DSM 23117 / BGSC 10A6 / LMG 26770 / FZB42) (Bacillus amyloliquefaciens subsp. plantarum) protein is N-(5'-phosphoribosyl)anthranilate isomerase.